We begin with the raw amino-acid sequence, 317 residues long: Acetyl-coenzyme A carboxylase carboxyl transferase subunit alpha (317 aa).

A CoA carboxyltransferase C-terminal domain is found at 33–294 (NLDDEITRLQ…KKRLLADLAD (262 aa)).

This sequence belongs to the AccA family. Acetyl-CoA carboxylase is a heterohexamer composed of biotin carboxyl carrier protein (AccB), biotin carboxylase (AccC) and two subunits each of ACCase subunit alpha (AccA) and ACCase subunit beta (AccD).

It localises to the cytoplasm. It carries out the reaction N(6)-carboxybiotinyl-L-lysyl-[protein] + acetyl-CoA = N(6)-biotinyl-L-lysyl-[protein] + malonyl-CoA. Its pathway is lipid metabolism; malonyl-CoA biosynthesis; malonyl-CoA from acetyl-CoA: step 1/1. Functionally, component of the acetyl coenzyme A carboxylase (ACC) complex. First, biotin carboxylase catalyzes the carboxylation of biotin on its carrier protein (BCCP) and then the CO(2) group is transferred by the carboxyltransferase to acetyl-CoA to form malonyl-CoA. This is Acetyl-coenzyme A carboxylase carboxyl transferase subunit alpha from Histophilus somni (strain 2336) (Haemophilus somnus).